Consider the following 252-residue polypeptide: N-glycosylase/DNA lyase (252 aa).

Positions 32, 60, and 71 each coordinate 8-oxoguanine. A helix-hairpin-helix region spans residues 129–193 (KTYYSDMEKL…KDSRIEKYTL (65 aa)). Residue lysine 153 is the Schiff-base intermediate with DNA of the active site. 8-oxoguanine is bound by residues phenylalanine 157 and proline 183. Aspartate 185 is an active-site residue. Residues aspartate 219 and tryptophan 223 each coordinate 8-oxoguanine.

This sequence belongs to the archaeal N-glycosylase/DNA lyase (AGOG) family.

The catalysed reaction is 2'-deoxyribonucleotide-(2'-deoxyribose 5'-phosphate)-2'-deoxyribonucleotide-DNA = a 3'-end 2'-deoxyribonucleotide-(2,3-dehydro-2,3-deoxyribose 5'-phosphate)-DNA + a 5'-end 5'-phospho-2'-deoxyribonucleoside-DNA + H(+). In terms of biological role, DNA repair enzyme that is part of the base excision repair (BER) pathway; protects from oxidative damage by removing the major product of DNA oxidation, 8-oxoguanine (GO), from single- and double-stranded DNA substrates. The chain is N-glycosylase/DNA lyase from Methanococcus maripaludis (strain DSM 14266 / JCM 13030 / NBRC 101832 / S2 / LL).